Consider the following 423-residue polypeptide: Histidine--tRNA ligase (423 aa).

This sequence belongs to the class-II aminoacyl-tRNA synthetase family. As to quaternary structure, homodimer.

It localises to the cytoplasm. It catalyses the reaction tRNA(His) + L-histidine + ATP = L-histidyl-tRNA(His) + AMP + diphosphate + H(+). This chain is Histidine--tRNA ligase, found in Actinobacillus succinogenes (strain ATCC 55618 / DSM 22257 / CCUG 43843 / 130Z).